Consider the following 602-residue polypeptide: Elongation factor 4 (602 aa).

One can recognise a tr-type G domain in the interval 6–188 (DHIRNFSIVA…AIVNKLPAPK (183 aa)). GTP-binding positions include 18 to 23 (DHGKST) and 135 to 138 (NKID).

Belongs to the TRAFAC class translation factor GTPase superfamily. Classic translation factor GTPase family. LepA subfamily.

Its subcellular location is the cell inner membrane. The catalysed reaction is GTP + H2O = GDP + phosphate + H(+). Its function is as follows. Required for accurate and efficient protein synthesis under certain stress conditions. May act as a fidelity factor of the translation reaction, by catalyzing a one-codon backward translocation of tRNAs on improperly translocated ribosomes. Back-translocation proceeds from a post-translocation (POST) complex to a pre-translocation (PRE) complex, thus giving elongation factor G a second chance to translocate the tRNAs correctly. Binds to ribosomes in a GTP-dependent manner. The polypeptide is Elongation factor 4 (Brucella melitensis biotype 2 (strain ATCC 23457)).